The primary structure comprises 302 residues: Merozoite surface protein 2 (302 aa).

The N-terminal stretch at 1–20 is a signal peptide; sequence MKVIKTLSIINFFIFVTFNI. N-linked (GlcNAc...) asparagine glycosylation is found at Asn-22 and Asn-36. Residues 44–228 form a polymorphic region region; sequence EESKPPTGAV…EQTESPELQS (185 aa). One copy of the 1; partial repeat lies at 55-60; sequence GSGAGA. The segment at 55-113 is 8 X 8 AA tandem repeats of G-S-G-A-G-A-V-A; that stretch reads GSGAGAGSGAGAVAGSGAGAVAGSGAGAVAGSGAGAVAGSGAGAVAGSGAGAVAGSGAG. Tandem repeats lie at residues 61–68, 69–76, 77–84, 85–92, 93–100, and 101–108. The 8; partial repeat unit spans residues 109–113; sequence GSGAG. Residues 114–263 are disordered; the sequence is NGANPGADAE…DSQKECTDGN (150 aa). Residues 125–150 show a composition bias toward low complexity; the sequence is SPSTPATTTTTTTTNDAEASTSTSSE. A compositionally biased stretch (basic and acidic residues) spans 151–167; that stretch reads NRNHNNAETNPKGKGEV. Composition is skewed to polar residues over residues 169–195 and 202–230; these read KPNQ…NVPR and KSPT…QSAP. Asn-179 is a glycosylation site (N-linked (GlcNAc...) asparagine). Asn-251 is a glycosylation site (N-linked (GlcNAc...) asparagine). Cys-259 and Cys-267 are joined by a disulfide. N-linked (GlcNAc...) asparagine glycosylation is found at Asn-275 and Asn-276. Asn-276 is lipidated: GPI-anchor amidated asparagine. A propeptide spans 277–302 (removed in mature form); sequence SSNIASINKFVVLISATLVLSFAIFI.

The protein resides in the cell membrane. May play a role in the merozoite attachment to the erythrocyte. In Plasmodium falciparum (isolate tak 9), this protein is Merozoite surface protein 2.